Here is a 66-residue protein sequence, read N- to C-terminus: Large ribosomal subunit protein bL31 (66 aa).

Zn(2+)-binding residues include cysteine 16, cysteine 18, cysteine 36, and cysteine 39.

The protein belongs to the bacterial ribosomal protein bL31 family. Type A subfamily. Part of the 50S ribosomal subunit. Zn(2+) serves as cofactor.

In terms of biological role, binds the 23S rRNA. The sequence is that of Large ribosomal subunit protein bL31 from Geobacillus kaustophilus (strain HTA426).